Here is a 340-residue protein sequence, read N- to C-terminus: NADH-quinone oxidoreductase subunit H (340 aa).

The next 8 membrane-spanning stretches (helical) occupy residues 4 to 24 (TIGI…PLLI), 78 to 98 (YLFV…WAVI), 113 to 133 (VLYL…AGWA), 151 to 171 (VSYE…AGSM), 184 to 204 (MLHW…IAGI), 244 to 264 (SMIL…LSPF), 273 to 293 (IFFV…FLFV), and 316 to 336 (VLIP…VAHV).

Belongs to the complex I subunit 1 family. NDH-1 is composed of 14 different subunits. Subunits NuoA, H, J, K, L, M, N constitute the membrane sector of the complex.

Its subcellular location is the cell inner membrane. The enzyme catalyses a quinone + NADH + 5 H(+)(in) = a quinol + NAD(+) + 4 H(+)(out). NDH-1 shuttles electrons from NADH, via FMN and iron-sulfur (Fe-S) centers, to quinones in the respiratory chain. The immediate electron acceptor for the enzyme in this species is believed to be ubiquinone. Couples the redox reaction to proton translocation (for every two electrons transferred, four hydrogen ions are translocated across the cytoplasmic membrane), and thus conserves the redox energy in a proton gradient. This subunit may bind ubiquinone. In Legionella pneumophila (strain Corby), this protein is NADH-quinone oxidoreductase subunit H.